The primary structure comprises 281 residues: 4-diphosphocytidyl-2-C-methyl-D-erythritol kinase (281 aa).

The active site involves K11. 92 to 102 (LVSAGLAGGSA) lines the ATP pocket. The active site involves D132.

Belongs to the GHMP kinase family. IspE subfamily.

It carries out the reaction 4-CDP-2-C-methyl-D-erythritol + ATP = 4-CDP-2-C-methyl-D-erythritol 2-phosphate + ADP + H(+). Its pathway is isoprenoid biosynthesis; isopentenyl diphosphate biosynthesis via DXP pathway; isopentenyl diphosphate from 1-deoxy-D-xylulose 5-phosphate: step 3/6. Its function is as follows. Catalyzes the phosphorylation of the position 2 hydroxy group of 4-diphosphocytidyl-2C-methyl-D-erythritol. In Ehrlichia ruminantium (strain Gardel), this protein is 4-diphosphocytidyl-2-C-methyl-D-erythritol kinase.